A 262-amino-acid polypeptide reads, in one-letter code: Acyl-[acyl-carrier-protein]--UDP-N-acetylglucosamine O-acyltransferase (262 aa).

It belongs to the transferase hexapeptide repeat family. LpxA subfamily. In terms of assembly, homotrimer.

It localises to the cytoplasm. The enzyme catalyses a (3R)-hydroxyacyl-[ACP] + UDP-N-acetyl-alpha-D-glucosamine = a UDP-3-O-[(3R)-3-hydroxyacyl]-N-acetyl-alpha-D-glucosamine + holo-[ACP]. Its pathway is glycolipid biosynthesis; lipid IV(A) biosynthesis; lipid IV(A) from (3R)-3-hydroxytetradecanoyl-[acyl-carrier-protein] and UDP-N-acetyl-alpha-D-glucosamine: step 1/6. Functionally, involved in the biosynthesis of lipid A, a phosphorylated glycolipid that anchors the lipopolysaccharide to the outer membrane of the cell. This is Acyl-[acyl-carrier-protein]--UDP-N-acetylglucosamine O-acyltransferase from Erwinia tasmaniensis (strain DSM 17950 / CFBP 7177 / CIP 109463 / NCPPB 4357 / Et1/99).